Reading from the N-terminus, the 582-residue chain is Aspartate--tRNA ligase (582 aa).

Residue Glu174 participates in L-aspartate binding. The aspartate stretch occupies residues 198–201 (QITK). Arg220 is an L-aspartate binding site. ATP is bound by residues 220 to 222 (RDE) and Gln229. His443 provides a ligand contact to L-aspartate. Glu477 contributes to the ATP binding site. L-aspartate is bound at residue Arg484. An ATP-binding site is contributed by 529–532 (GLDR).

This sequence belongs to the class-II aminoacyl-tRNA synthetase family. Type 1 subfamily. In terms of assembly, homodimer.

Its subcellular location is the cytoplasm. It carries out the reaction tRNA(Asp) + L-aspartate + ATP = L-aspartyl-tRNA(Asp) + AMP + diphosphate. Functionally, catalyzes the attachment of L-aspartate to tRNA(Asp) in a two-step reaction: L-aspartate is first activated by ATP to form Asp-AMP and then transferred to the acceptor end of tRNA(Asp). This chain is Aspartate--tRNA ligase, found in Streptococcus pyogenes serotype M1.